The chain runs to 185 residues: MILPVFLYGQPVLRKEAEDVPKDYPDLKQLVANMFETMYNADGVGLAAPQVGLSIRLVVIDGDVMGDDFPECKGFKRALINPEFLERSEEEIAMEEGCLSLPGIHEKVSRSKTVRVRYWDENWEEHEEVVEGFAARIVQHECEHLTGHVFIDNVSAIRRQLNKGKLNSIIKGTVRCSYRAKAVGK.

Residues C98 and H140 each coordinate Fe cation. E141 is an active-site residue. H144 is a Fe cation binding site.

The protein belongs to the polypeptide deformylase family. It depends on Fe(2+) as a cofactor.

It carries out the reaction N-terminal N-formyl-L-methionyl-[peptide] + H2O = N-terminal L-methionyl-[peptide] + formate. Its function is as follows. Removes the formyl group from the N-terminal Met of newly synthesized proteins. Requires at least a dipeptide for an efficient rate of reaction. N-terminal L-methionine is a prerequisite for activity but the enzyme has broad specificity at other positions. The protein is Peptide deformylase of Parabacteroides distasonis (strain ATCC 8503 / DSM 20701 / CIP 104284 / JCM 5825 / NCTC 11152).